Reading from the N-terminus, the 508-residue chain is Bifunctional purine biosynthesis protein PurH (508 aa).

An MGS-like domain is found at 1-145 (MTKRALISVS…KNHQYVTVIV (145 aa)).

The protein belongs to the PurH family.

The catalysed reaction is (6R)-10-formyltetrahydrofolate + 5-amino-1-(5-phospho-beta-D-ribosyl)imidazole-4-carboxamide = 5-formamido-1-(5-phospho-D-ribosyl)imidazole-4-carboxamide + (6S)-5,6,7,8-tetrahydrofolate. It catalyses the reaction IMP + H2O = 5-formamido-1-(5-phospho-D-ribosyl)imidazole-4-carboxamide. Its pathway is purine metabolism; IMP biosynthesis via de novo pathway; 5-formamido-1-(5-phospho-D-ribosyl)imidazole-4-carboxamide from 5-amino-1-(5-phospho-D-ribosyl)imidazole-4-carboxamide (10-formyl THF route): step 1/1. The protein operates within purine metabolism; IMP biosynthesis via de novo pathway; IMP from 5-formamido-1-(5-phospho-D-ribosyl)imidazole-4-carboxamide: step 1/1. This chain is Bifunctional purine biosynthesis protein PurH, found in Lysinibacillus sphaericus (strain C3-41).